Consider the following 86-residue polypeptide: Elongation factor 1-beta (86 aa).

It belongs to the EF-1-beta/EF-1-delta family.

In terms of biological role, promotes the exchange of GDP for GTP in EF-1-alpha/GDP, thus allowing the regeneration of EF-1-alpha/GTP that could then be used to form the ternary complex EF-1-alpha/GTP/AAtRNA. This chain is Elongation factor 1-beta, found in Methanocorpusculum labreanum (strain ATCC 43576 / DSM 4855 / Z).